The chain runs to 122 residues: Large ribosomal subunit protein bL12 (122 aa).

Belongs to the bacterial ribosomal protein bL12 family. Homodimer. Part of the ribosomal stalk of the 50S ribosomal subunit. Forms a multimeric L10(L12)X complex, where L10 forms an elongated spine to which 2 to 4 L12 dimers bind in a sequential fashion. Binds GTP-bound translation factors.

Its function is as follows. Forms part of the ribosomal stalk which helps the ribosome interact with GTP-bound translation factors. Is thus essential for accurate translation. The polypeptide is Large ribosomal subunit protein bL12 (Streptococcus sanguinis (strain SK36)).